A 787-amino-acid polypeptide reads, in one-letter code: Signal transducer and activator of transcription 5B (787 aa).

Phosphotyrosine is present on Y90. Phosphoserine is present on residues S128 and S193. Residues K232–T321 form a required for interaction with NMI region. Positions W589 to V686 constitute an SH2 domain. Phosphotyrosine is present on Y682. Phosphotyrosine; by HCK, JAK and PTK6 is present on Y699.

It belongs to the transcription factor STAT family. Upon activation, forms homodimers. Forms also heterodimers with related family members. Binds NR3C1. Interacts with NCOA1. Interacts with NMI. Interacts with SOCS7. Interacts (via SH2 domain) with INSR. Interacts with CPEB3; this inhibits STAT5B-mediated transcriptional activation. Tyrosine phosphorylated in response to signaling via activated KIT, resulting in translocation to the nucleus. Tyrosine phosphorylated in response to signaling via activated FLT3; wild-type FLT3 results in much weaker phosphorylation than constitutively activated mutant FLT3. Alternatively, can be phosphorylated by JAK2. Phosphorylation at Tyr-699 by PTK6 or HCK leads to an increase of its transcriptional activity.

It localises to the cytoplasm. Its subcellular location is the nucleus. In terms of biological role, carries out a dual function: signal transduction and activation of transcription. Mediates cellular responses to the cytokine KITLG/SCF and other growth factors. Binds to the GAS element and activates PRL-induced transcription. Positively regulates hematopoietic/erythroid differentiation. This Homo sapiens (Human) protein is Signal transducer and activator of transcription 5B (STAT5B).